Consider the following 106-residue polypeptide: Cytochrome c oxidase assembly protein COX16 homolog, mitochondrial (106 aa).

Residues 1-15 (MIAPAVLRALRKNKT) are Mitochondrial matrix-facing. The chain crosses the membrane as a helical span at residues 16 to 33 (LRYGVPMLLLVVGGSFGL). Topologically, residues 34–106 (REFSQIRYDA…NPETLKPKTT (73 aa)) are mitochondrial intermembrane. The disordered stretch occupies residues 81–106 (IRGPRPWEDPQLLQGRNPETLKPKTT).

Belongs to the COX16 family. In terms of assembly, associates with the MITRAC complex. Interacts with MT-CO2/COX; specifically interacts with newly synthesized MT-CO2/COX. Interacts with SCO1, SCO2 and COA6.

Its subcellular location is the mitochondrion inner membrane. Required for the assembly of the mitochondrial respiratory chain complex IV (CIV), also known as cytochrome c oxidase. Promotes the insertion of copper into the active site of cytochrome c oxidase subunit II (MT-CO2/COX2). Interacts specifically with newly synthesized MT-CO2/COX and its copper center-forming metallochaperones SCO1, SCO2 and COA6. Probably facilitates MT-CO2/COX2 association with the MITRAC assembly intermediate containing MT-CO1/COX1, thereby participating in merging the MT-CO1/COX1 and MT-CO2/COX2 assembly lines. This Mus musculus (Mouse) protein is Cytochrome c oxidase assembly protein COX16 homolog, mitochondrial.